The sequence spans 155 residues: Secreted RxLR effector protein 38 (155 aa).

The N-terminal stretch at 1–17 is a signal peptide; it reads MHLIYIVMAATATTLHA. The RxLR-dEER signature appears at 49-64; the sequence is RFLRGAYEDVHREEER.

It belongs to the RxLR effector family.

Its subcellular location is the secreted. It is found in the host nucleus. It localises to the host cytoplasm. Secreted effector that completely suppresses the host cell death induced by cell death-inducing proteins. This Plasmopara viticola (Downy mildew of grapevine) protein is Secreted RxLR effector protein 38.